A 114-amino-acid chain; its full sequence is Large ribosomal subunit protein bL20c (114 aa).

This sequence belongs to the bacterial ribosomal protein bL20 family.

The protein resides in the plastid. It is found in the cyanelle. Binds directly to 23S ribosomal RNA and is necessary for the in vitro assembly process of the 50S ribosomal subunit. It is not involved in the protein synthesizing functions of that subunit. This chain is Large ribosomal subunit protein bL20c (rpl20), found in Cyanophora paradoxa.